The primary structure comprises 206 residues: Alpha-S1-casein (206 aa).

An N-terminal signal peptide occupies residues 1 to 15 (MKLLIFICLAAVALA). A phosphoserine mark is found at Ser-33, Ser-77, Ser-78, Ser-79, Ser-80, Ser-81, Ser-82, and Ser-89. Residues 67-106 (HGMEGHEQRGSSSSSSEEVVGNSAEQKHVQKEEDVPSQSY) form a disordered region. Residues 91 to 100 (EQKHVQKEED) show a composition bias toward basic and acidic residues.

This sequence belongs to the alpha-casein family. Mammary gland specific. Secreted in milk.

It localises to the secreted. Important role in the capacity of milk to transport calcium phosphate. In Sus scrofa (Pig), this protein is Alpha-S1-casein (CSN1S1).